Reading from the N-terminus, the 498-residue chain is Cysteine--tRNA ligase (498 aa).

Cys-44 contributes to the Zn(2+) binding site. The 'HIGH' region motif lies at 46–56; sequence PTVYSDAHLGH. Zn(2+) contacts are provided by Cys-235, His-260, and Glu-264. Positions 291-295 match the 'KMSKS' region motif; sequence KMSKS. Lys-294 is an ATP binding site.

Belongs to the class-I aminoacyl-tRNA synthetase family. In terms of assembly, monomer. Zn(2+) serves as cofactor.

It is found in the cytoplasm. It carries out the reaction tRNA(Cys) + L-cysteine + ATP = L-cysteinyl-tRNA(Cys) + AMP + diphosphate. The chain is Cysteine--tRNA ligase (cysS) from Deinococcus radiodurans (strain ATCC 13939 / DSM 20539 / JCM 16871 / CCUG 27074 / LMG 4051 / NBRC 15346 / NCIMB 9279 / VKM B-1422 / R1).